The following is a 452-amino-acid chain: Translation initiation factor eIF2B subunit gamma (452 aa).

The residue at position 1 (Met1) is an N-acetylmethionine. Residue Ser260 is modified to Phosphoserine.

The protein belongs to the eIF-2B gamma/epsilon subunits family. As to quaternary structure, component of the translation initiation factor 2B (eIF2B) complex which is a heterodecamer of two sets of five different subunits: alpha, beta, gamma, delta and epsilon. Subunits alpha, beta and delta comprise a regulatory subcomplex and subunits epsilon and gamma comprise a catalytic subcomplex. Within the complex, the hexameric regulatory complex resides at the center, with the two heterodimeric catalytic subcomplexes bound on opposite sides.

The protein resides in the cytoplasm. The protein localises to the cytosol. Activated by the chemical integrated stress response (ISR) inhibitor ISRIB which stimulates guanine nucleotide exchange factor activity for both phosphorylated and unphosphorylated eIF2. Acts as a component of the translation initiation factor 2B (eIF2B) complex, which catalyzes the exchange of GDP for GTP on the eukaryotic initiation factor 2 (eIF2) complex gamma subunit. Its guanine nucleotide exchange factor activity is repressed when bound to eIF2 complex phosphorylated on the alpha subunit, thereby limiting the amount of methionyl-initiator methionine tRNA available to the ribosome and consequently global translation is repressed. The protein is Translation initiation factor eIF2B subunit gamma (EIF2B3) of Macaca fascicularis (Crab-eating macaque).